Consider the following 561-residue polypeptide: Putative transport protein YbjL (561 aa).

A run of 5 helical transmembrane segments spans residues 8–28 (LLNG…LCLG), 32–52 (LGSI…LLGQ), 66–86 (FMLF…SIFF), 94–114 (MLAL…GKLF), and 158–178 (NLSL…IVGA). RCK C-terminal domains lie at 202 to 288 (LDTD…SFRN) and 292 to 373 (VFDR…RIGF). 5 helical membrane-spanning segments follow: residues 383–403 (LLAF…TFQF), 406–426 (FSFG…LGFM), 451–471 (VFMA…LGAI), 475–495 (MLVA…LFGA), and 540–560 (AIAN…WPGL).

It belongs to the AAE transporter (TC 2.A.81) family. YbjL subfamily.

The protein resides in the cell membrane. This chain is Putative transport protein YbjL, found in Escherichia fergusonii (strain ATCC 35469 / DSM 13698 / CCUG 18766 / IAM 14443 / JCM 21226 / LMG 7866 / NBRC 102419 / NCTC 12128 / CDC 0568-73).